Here is a 410-residue protein sequence, read N- to C-terminus: Argininosuccinate synthase (410 aa).

Position 10–18 (10–18 (AYSGGLDTS)) interacts with ATP. The L-citrulline site is built by Tyr-88 and Ser-93. ATP is bound at residue Gly-118. L-aspartate is bound by residues Thr-120, Asn-124, and Asp-125. L-citrulline is bound at residue Asn-124. Arg-128, Ser-177, Ser-186, Glu-262, and Tyr-274 together coordinate L-citrulline.

It belongs to the argininosuccinate synthase family. Type 1 subfamily. As to quaternary structure, homotetramer.

The protein resides in the cytoplasm. The catalysed reaction is L-citrulline + L-aspartate + ATP = 2-(N(omega)-L-arginino)succinate + AMP + diphosphate + H(+). The protein operates within amino-acid biosynthesis; L-arginine biosynthesis; L-arginine from L-ornithine and carbamoyl phosphate: step 2/3. The polypeptide is Argininosuccinate synthase (Thermoanaerobacter sp. (strain X514)).